The following is a 679-amino-acid chain: Methionine--tRNA ligase (679 aa).

Positions 15–25 match the 'HIGH' region motif; the sequence is PYANGPIHLGH. Zn(2+)-binding residues include Cys-146, Cys-149, Cys-159, and Cys-162. Positions 332–336 match the 'KMSKS' region motif; the sequence is KMSKS. ATP is bound at residue Lys-335. A tRNA-binding domain is found at 578-679; it reads DFAKIDLRIA…EGAQPGMKVK (102 aa).

Belongs to the class-I aminoacyl-tRNA synthetase family. MetG type 1 subfamily. Homodimer. Requires Zn(2+) as cofactor.

The protein resides in the cytoplasm. The enzyme catalyses tRNA(Met) + L-methionine + ATP = L-methionyl-tRNA(Met) + AMP + diphosphate. Is required not only for elongation of protein synthesis but also for the initiation of all mRNA translation through initiator tRNA(fMet) aminoacylation. The protein is Methionine--tRNA ligase of Shewanella halifaxensis (strain HAW-EB4).